The primary structure comprises 464 residues: Trehalose-6-phosphate synthase (464 aa).

D-glucose 6-phosphate is bound at residue arginine 10. 23–24 (GG) serves as a coordination point for UDP-alpha-D-glucose. D-glucose 6-phosphate is bound by residues tyrosine 81 and aspartate 135. Residues arginine 268 and lysine 273 each contribute to the UDP-alpha-D-glucose site. Arginine 306 provides a ligand contact to D-glucose 6-phosphate. Residue 371-375 (LVAKE) participates in UDP-alpha-D-glucose binding.

This sequence belongs to the glycosyltransferase 20 family. In terms of assembly, homotetramer.

The catalysed reaction is D-glucose 6-phosphate + UDP-alpha-D-glucose = alpha,alpha-trehalose 6-phosphate + UDP + H(+). It functions in the pathway glycan biosynthesis; trehalose biosynthesis. Functionally, probably involved in the osmoprotection via the biosynthesis of trehalose. Catalyzes the transfer of glucose from UDP-alpha-D-glucose (UDP-Glc) to D-glucose 6-phosphate (Glc-6-P) to form trehalose-6-phosphate. Acts with retention of the anomeric configuration of the UDP-sugar donor. In Sinorhizobium fredii (strain NBRC 101917 / NGR234), this protein is Trehalose-6-phosphate synthase.